A 299-amino-acid chain; its full sequence is Ethylmalonyl-CoA decarboxylase (299 aa).

Belongs to the enoyl-CoA hydratase/isomerase family.

It is found in the cytoplasm. The protein resides in the cytosol. The enzyme catalyses (2S)-ethylmalonyl-CoA + H(+) = butanoyl-CoA + CO2. It carries out the reaction (S)-methylmalonyl-CoA + H(+) = propanoyl-CoA + CO2. It catalyses the reaction (2R)-ethylmalonyl-CoA + H(+) = butanoyl-CoA + CO2. In terms of biological role, decarboxylates ethylmalonyl-CoA, a potentially toxic metabolite, to form butyryl-CoA, suggesting it might be involved in metabolite proofreading. Acts preferentially on (S)-ethylmalonyl-CoA but also has some activity on the (R)-isomer. Also has methylmalonyl-CoA decarboxylase activity at lower level. The chain is Ethylmalonyl-CoA decarboxylase (echdc1) from Xenopus tropicalis (Western clawed frog).